The following is a 633-amino-acid chain: Probable potassium transport system protein Kup 2 (633 aa).

The next 12 membrane-spanning stretches (helical) occupy residues 18–38 (FLAL…TSPL), 61–81 (LVSL…VLFL), 107–127 (PVLM…DAMI), 143–163 (VAPA…LLLF), 173–193 (VSVF…AAGV), 211–231 (AIGF…AIFL), 255–275 (WFAV…ALVL), 287–307 (LMFP…ATII), 345–365 (IYLP…MLMF), 371–391 (LAPA…ILAF), 402–422 (ALTA…FLGA), and 427–447 (VHHG…MMWT).

Belongs to the HAK/KUP transporter (TC 2.A.72) family.

It is found in the cell inner membrane. The catalysed reaction is K(+)(in) + H(+)(in) = K(+)(out) + H(+)(out). Functionally, transport of potassium into the cell. Likely operates as a K(+):H(+) symporter. In Rhizobium meliloti (strain 1021) (Ensifer meliloti), this protein is Probable potassium transport system protein Kup 2.